The following is a 137-amino-acid chain: Large ribosomal subunit protein uL16c (137 aa).

Belongs to the universal ribosomal protein uL16 family. As to quaternary structure, part of the 50S ribosomal subunit.

It is found in the plastid. The protein resides in the chloroplast. The sequence is that of Large ribosomal subunit protein uL16c from Thalassiosira pseudonana (Marine diatom).